The following is a 455-amino-acid chain: tRNA modification GTPase MnmE (455 aa).

3 residues coordinate (6S)-5-formyl-5,6,7,8-tetrahydrofolate: arginine 24, glutamate 81, and lysine 120. Residues 216–378 (GMTVVIAGRP…LREHLKACMG (163 aa)) form the TrmE-type G domain. A K(+)-binding site is contributed by asparagine 226. GTP contacts are provided by residues 226–231 (NAGKSS), 245–251 (TDIAGTT), 270–273 (DTAG), 335–338 (NKAD), and 359–361 (SAR). Serine 230 serves as a coordination point for Mg(2+). Positions 245, 247, and 250 each coordinate K(+). Threonine 251 contributes to the Mg(2+) binding site. Residue lysine 455 coordinates (6S)-5-formyl-5,6,7,8-tetrahydrofolate.

It belongs to the TRAFAC class TrmE-Era-EngA-EngB-Septin-like GTPase superfamily. TrmE GTPase family. Homodimer. Heterotetramer of two MnmE and two MnmG subunits. It depends on K(+) as a cofactor.

The protein localises to the cytoplasm. Exhibits a very high intrinsic GTPase hydrolysis rate. Involved in the addition of a carboxymethylaminomethyl (cmnm) group at the wobble position (U34) of certain tRNAs, forming tRNA-cmnm(5)s(2)U34. This chain is tRNA modification GTPase MnmE, found in Pseudomonas paraeruginosa (strain DSM 24068 / PA7) (Pseudomonas aeruginosa (strain PA7)).